The sequence spans 256 residues: Imidazole glycerol phosphate synthase subunit HisF (256 aa).

Residues Asp11 and Asp130 contribute to the active site.

This sequence belongs to the HisA/HisF family. Heterodimer of HisH and HisF.

It localises to the cytoplasm. It catalyses the reaction 5-[(5-phospho-1-deoxy-D-ribulos-1-ylimino)methylamino]-1-(5-phospho-beta-D-ribosyl)imidazole-4-carboxamide + L-glutamine = D-erythro-1-(imidazol-4-yl)glycerol 3-phosphate + 5-amino-1-(5-phospho-beta-D-ribosyl)imidazole-4-carboxamide + L-glutamate + H(+). It participates in amino-acid biosynthesis; L-histidine biosynthesis; L-histidine from 5-phospho-alpha-D-ribose 1-diphosphate: step 5/9. In terms of biological role, IGPS catalyzes the conversion of PRFAR and glutamine to IGP, AICAR and glutamate. The HisF subunit catalyzes the cyclization activity that produces IGP and AICAR from PRFAR using the ammonia provided by the HisH subunit. The polypeptide is Imidazole glycerol phosphate synthase subunit HisF (Methylocella silvestris (strain DSM 15510 / CIP 108128 / LMG 27833 / NCIMB 13906 / BL2)).